Here is a 487-residue protein sequence, read N- to C-terminus: Steroid 21-hydroxylase (487 aa).

Residues Arg92 and Lys117 each coordinate heme b. Arg228 is a binding site for 17alpha-hydroxyprogesterone. Arg228 serves as a coordination point for progesterone. Residues His357, Arg418, and Cys420 each coordinate heme b.

This sequence belongs to the cytochrome P450 family. It depends on heme b as a cofactor.

The protein resides in the endoplasmic reticulum membrane. It localises to the microsome membrane. The catalysed reaction is progesterone + reduced [NADPH--hemoprotein reductase] + O2 = 21-hydroxyprogesterone + oxidized [NADPH--hemoprotein reductase] + H2O + H(+). It carries out the reaction 17alpha-hydroxyprogesterone + reduced [NADPH--hemoprotein reductase] + O2 = 11-deoxycortisol + oxidized [NADPH--hemoprotein reductase] + H2O + H(+). A cytochrome P450 monooxygenase that plays a major role in adrenal steroidogenesis. Catalyzes the hydroxylation at C-21 of progesterone and 17alpha-hydroxyprogesterone to respectively form 11-deoxycorticosterone and 11-deoxycortisol, intermediate metabolites in the biosynthetic pathway of mineralocorticoids and glucocorticoids. Mechanistically, uses molecular oxygen inserting one oxygen atom into a substrate, and reducing the second into a water molecule, with two electrons provided by NADPH via cytochrome P450 reductase (CPR; NADPH-ferrihemoprotein reductase). The chain is Steroid 21-hydroxylase (Cyp21) from Mus musculus (Mouse).